The sequence spans 175 residues: Transcriptional repressor NrdR (175 aa).

Residues 3-32 (CPYCSHPDSKVIDSRDVDDGVRRRRECVVC) fold into a zinc finger. The ATP-cone domain occupies 47–137 (LFVVKKDQRR…VYREFTDITQ (91 aa)).

The protein belongs to the NrdR family. Zn(2+) is required as a cofactor.

Functionally, negatively regulates transcription of bacterial ribonucleotide reductase nrd genes and operons by binding to NrdR-boxes. The sequence is that of Transcriptional repressor NrdR from Dehalococcoides mccartyi (strain ATCC BAA-2100 / JCM 16839 / KCTC 5957 / BAV1).